Consider the following 420-residue polypeptide: Glucose-1-phosphate adenylyltransferase (420 aa).

Residues tyrosine 107, glycine 173, 188–189 (EK), and serine 206 contribute to the alpha-D-glucose 1-phosphate site.

Belongs to the bacterial/plant glucose-1-phosphate adenylyltransferase family. Homotetramer.

It catalyses the reaction alpha-D-glucose 1-phosphate + ATP + H(+) = ADP-alpha-D-glucose + diphosphate. It participates in glycan biosynthesis; glycogen biosynthesis. Functionally, involved in the biosynthesis of ADP-glucose, a building block required for the elongation reactions to produce glycogen. Catalyzes the reaction between ATP and alpha-D-glucose 1-phosphate (G1P) to produce pyrophosphate and ADP-Glc. The polypeptide is Glucose-1-phosphate adenylyltransferase (Shewanella sp. (strain ANA-3)).